The sequence spans 694 residues: Putative ankyrin repeat protein RBE_0921 (694 aa).

ANK repeat units follow at residues 122 to 151 (LGKT…NINV), 155 to 185 (NGRN…NINS), 216 to 245 (FNRT…NVEA), 249 to 275 (TGET…NTEA), 279 to 317 (LGRT…NPNA), 321 to 350 (YGFT…KFKK), 351 to 382 (NRYE…NIND), 384 to 413 (NGQN…DNGK), 423 to 452 (QRNT…DINA), and 456 to 485 (DGET…DINI).

The polypeptide is Putative ankyrin repeat protein RBE_0921 (Rickettsia bellii (strain RML369-C)).